The sequence spans 644 residues: Phosphomethylpyrimidine synthase (644 aa).

Substrate-binding positions include N236, M265, Y294, H330, 350 to 352 (SRG), 391 to 394 (DGLR), and E430. Residue H434 participates in Zn(2+) binding. Substrate is bound at residue Y457. H498 lines the Zn(2+) pocket. Positions 578, 581, and 586 each coordinate [4Fe-4S] cluster.

The protein belongs to the ThiC family. In terms of assembly, homodimer. The cofactor is [4Fe-4S] cluster.

The enzyme catalyses 5-amino-1-(5-phospho-beta-D-ribosyl)imidazole + S-adenosyl-L-methionine = 4-amino-2-methyl-5-(phosphooxymethyl)pyrimidine + CO + 5'-deoxyadenosine + formate + L-methionine + 3 H(+). Its pathway is cofactor biosynthesis; thiamine diphosphate biosynthesis. Catalyzes the synthesis of the hydroxymethylpyrimidine phosphate (HMP-P) moiety of thiamine from aminoimidazole ribotide (AIR) in a radical S-adenosyl-L-methionine (SAM)-dependent reaction. This chain is Phosphomethylpyrimidine synthase, found in Aliivibrio fischeri (strain ATCC 700601 / ES114) (Vibrio fischeri).